A 479-amino-acid polypeptide reads, in one-letter code: MSHFKNYQISHDILRALEGLGYTEPTKVQQSVIPAALERKDLVVKSQTGSGKTASFGIPLCELANWDENKPQALILTPTRELAVQVKEDITNIGRFKRIKATAVFGKSSFDKQKAELKQKSHIVVGTPGRVLDHIEKGTLPLDRLSYLVIDEADEMLNMGFIEQVEAIIKHLPTERTTMLFSATLPQDIEKLSRQYMQNPEHIEVKAAGLTTRNIEHAVIQVREENKFSLLKDVLMTENPDSCIIFCRTKEHVNQLTDELDDLGYPCDKIHGGMIQEDRFDVMNEFKRGEYRYLVATDVAARGIDIENISLVINYDLPLEKESYVHRTGRTGRAGNKGKAISFVTAFEKRFLADIEEYIGFEIQKIEAPSQEEVARKKPEFLAKLNDRPESKKDKSEELNKDIMKLYFNGGKKKKIRAVDFVGTIAKIDGVSADDIGIITIMDNASYVEILNGKGPHVLKVMKNTTVKGKQLKVNKANK.

A Q motif motif is present at residues 2–30 (SHFKNYQISHDILRALEGLGYTEPTKVQQ). The 171-residue stretch at 33-203 (IPAALERKDL…RQYMQNPEHI (171 aa)) folds into the Helicase ATP-binding domain. 46 to 53 (SQTGSGKT) contacts ATP. A DEAD box motif is present at residues 151 to 154 (DEAD). One can recognise a Helicase C-terminal domain in the interval 214 to 374 (NIEHAVIQVR…KIEAPSQEEV (161 aa)). The tract at residues 404–479 (MKLYFNGGKK…KQLKVNKANK (76 aa)) is involved in 23S rRNA binding.

It belongs to the DEAD box helicase family. DbpA subfamily. In terms of assembly, may interact with RNA helicases CshA and CshB.

Its subcellular location is the cytoplasm. The enzyme catalyses ATP + H2O = ADP + phosphate + H(+). ATPase activity is stimulated by interaction with RNA. Functionally, DEAD-box RNA helicase involved in the assembly of the 50S ribosomal subunit. Has an RNA-dependent ATPase activity, which is specific for 23S rRNA, and a 3' to 5' RNA helicase activity that uses the energy of ATP hydrolysis to destabilize and unwind short rRNA duplexes. In Bacillus subtilis (strain 168), this protein is ATP-dependent RNA helicase DbpA.